We begin with the raw amino-acid sequence, 230 residues long: Cytidylate kinase (230 aa).

ATP is bound at residue 12 to 20 (GPSGAGKGT).

This sequence belongs to the cytidylate kinase family. Type 1 subfamily.

It localises to the cytoplasm. The enzyme catalyses CMP + ATP = CDP + ADP. It carries out the reaction dCMP + ATP = dCDP + ADP. The sequence is that of Cytidylate kinase from Shewanella baltica (strain OS223).